Consider the following 467-residue polypeptide: tRNA-2-methylthio-N(6)-dimethylallyladenosine synthase (467 aa).

A disordered region spans residues 1–20; the sequence is MSDDTTQIEPAMAQETSPRA. The region spanning 23–143 is the MTTase N-terminal domain; that stretch reads RKVFVKTYGC…LPNALARVRG (121 aa). Residues C32, C68, C106, C184, C188, and C191 each coordinate [4Fe-4S] cluster. The Radical SAM core domain maps to 170–402; it reads RKRGVSAFLT…QALLSAQQYA (233 aa). Residues 405–467 enclose the TRAM domain; it reads DSMIGRKMDV…TNSLIAQKLA (63 aa).

Belongs to the methylthiotransferase family. MiaB subfamily. In terms of assembly, monomer. It depends on [4Fe-4S] cluster as a cofactor.

The protein resides in the cytoplasm. It catalyses the reaction N(6)-dimethylallyladenosine(37) in tRNA + (sulfur carrier)-SH + AH2 + 2 S-adenosyl-L-methionine = 2-methylsulfanyl-N(6)-dimethylallyladenosine(37) in tRNA + (sulfur carrier)-H + 5'-deoxyadenosine + L-methionine + A + S-adenosyl-L-homocysteine + 2 H(+). Its function is as follows. Catalyzes the methylthiolation of N6-(dimethylallyl)adenosine (i(6)A), leading to the formation of 2-methylthio-N6-(dimethylallyl)adenosine (ms(2)i(6)A) at position 37 in tRNAs that read codons beginning with uridine. The polypeptide is tRNA-2-methylthio-N(6)-dimethylallyladenosine synthase (Brucella melitensis biotype 1 (strain ATCC 23456 / CCUG 17765 / NCTC 10094 / 16M)).